The sequence spans 1389 residues: CRISPR-associated endoribonuclease Cas13a (1389 aa).

An NTD region spans residues 1–347 (MGNLFGHKRW…DKHEKFKIER (347 aa)). Position 219 (arginine 219) interacts with crRNA. 3 binds crRNA regions span residues 330 to 342 (YIKS…KHEK), 405 to 408 (KKHY), and 432 to 436 (YRYLK). The interval 348–498 (ENKKDKIVKF…KLRHNDIDMT (151 aa)) is helical-1. Residues arginine 438 and lysine 441 each act as for pre-crRNA processing in the active site. Residue lysine 441 participates in crRNA binding. The binds crRNA stretch occupies residues 471–475 (KILKR). Lysine 489 serves as a coordination point for crRNA. The HEPN-like fold 1-I stretch occupies residues 499–636 (TVNTDDFSRL…LKISDEEVSK (138 aa)). Residues 502 to 509 (TDDFSRLH) are binds crRNA. Active-site for target ssRNA cleavage residues include arginine 597 and histidine 602. Residues 637–828 (ALNLDVVFKD…ERITVKTSDK (192 aa)) form a helical-2 region. Glutamine 759 is a binding site for crRNA. The tract at residues 829-899 (TIVINDDFEY…ECITENWNLN (71 aa)) is HEPN-like fold 1-II. Residues 853–858 (NKIRNR) form a binds crRNA region. Tryptophan 865 contributes to the crRNA binding site. Coiled-coil stretches lie at residues 893-920 (TENW…FKIQ), 968-1046 (EIDK…FQEI), and 1101-1131 (KNKI…KYIK). The linker stretch occupies residues 900–1170 (LEEFIQKMKE…EYKKIRDLVE (271 aa)). Residues 1170–1290 (EFNYLNKIES…ISHFYIVRNP (121 aa)) form an HEPN-like fold 2 region. Residues arginine 1278 and histidine 1283 each act as for target ssRNA cleavage in the active site. 2 binds crRNA regions span residues 1311-1316 (TRYNNS) and 1338-1339 (KK).

Belongs to the CRISPR-associated endoribonuclease Cas13a family. In terms of assembly, monomer. Mg(2+) serves as cofactor.

With respect to regulation, RNase activity on target is decreased by EDTA. Target RNA acts as an activator for non-specific ssRNA degradation. Functionally, CRISPR (clustered regularly interspaced short palindromic repeat), is an adaptive immune system that provides protection against mobile genetic elements (viruses, transposable elements and conjugative plasmids). CRISPR clusters contain sequences complementary to antecedent mobile elements (spacers) and target invading nucleic acids. Unlike many single-component effectors, this CRISPR-Cas system targets RNA. CRISPR clusters are transcribed from pre-CRISPR RNA (crRNA) and processed into crRNA (optimally 28 nucleotides in this system) by this protein. This protein processes pre-crRNA at a 'non-typical' site 1 nucleotide upstream of the pre-crRNA stem-loop; it cleaves pre-crRNA from L.buccalis and L.wadei in a similar fashion, whereas the enzymes from the latter 2 bacteria cleave their own pre-crRNA 3 nt further upstream. When the appropriate target sequences are cloned into the CRISPR array, confers immunity to ssRNA(+) enterobacteria phage MS2. Cleaves linear target ssRNA in a crRNA-dependent fashion, preferentially before U residues; has no activity on partially dsRNA, ssDNA or dsDNA. RNA secondary structure surrounding the target influence the cleavage site and efficiency; unlike other CRISPR-Cas effectors Cas13a cleaves outside of the crRNA binding site. In the presence of a viable RNA target other RNAs are also degraded (called collateral RNA degradation), suggesting this type of CRISPR-Cas might also prevent viral spread by inducing programmed cell death or dormancy. This system has a 3' protospacer flanking site (PFS), it does not cleave when the 3' PFS is G (PFS is equivalent to PAM, the protospacer adjacent motif). Mutations of its active site residues results in an RNA-programmed RNA-binding protein. The protein is CRISPR-associated endoribonuclease Cas13a of Leptotrichia shahii (strain DSM 19757 / CCUG 47503 / CIP 107916 / JCM 16776 / LB37).